Reading from the N-terminus, the 141-residue chain is uncharacterized protein (141 aa).

A run of 2 helical transmembrane segments spans residues 12-32 (GIAG…TLVT) and 35-55 (PGRV…SATW).

Its subcellular location is the cell membrane. This is an uncharacterized protein from Mycobacterium tuberculosis (strain CDC 1551 / Oshkosh).